A 405-amino-acid chain; its full sequence is Dematin (405 aa).

Disordered stretches follow at residues 1-30 (MERL…PSSI), 79-158 (PRSR…GSPQ), 173-192 (FPAA…TDYW), and 203-332 (TEWR…DRGN). Low complexity predominate over residues 11-29 (SPGSVSPSRDSSVPGSPSS). Residues Ser16, Ser18, Ser26, Ser92, Ser96, Ser105, Ser110, Ser113, and Ser156 each carry the phosphoserine modification. Residues 108–123 (IISQASAPRTTGTPRT) are compositionally biased toward polar residues. The span at 216-227 (EEEEEEEDDDSG) shows a compositional bias: acidic residues. The interval 224–308 (DDSGEEMKAL…SRLQSTEFSP (85 aa)) is interaction with RASGRF2. At Ser226 the chain carries Phosphoserine. Basic and acidic residues-rich tracts occupy residues 228–242 (EEMK…EELS) and 252–261 (ILKEEMEKSL). 8 positions are modified to phosphoserine: Ser269, Ser279, Ser289, Ser303, Ser315, Ser333, Ser372, and Ser383. Over residues 276-322 (FHTSLHQGTSKSSSLPAYGRTTLSRLQSTEFSPSGSETGSPGLQNGE) the composition is skewed to polar residues. The HP domain occupies 337 to 405 (VLEQKIYPYE…NELKKKASLF (69 aa)). Position 403 is a phosphoserine; by PKA (Ser403).

The protein belongs to the villin/gelsolin family. In terms of assembly, monomeric (isoform 2); under reducing conditions. Self-associates. Exists under oxidizing condition as a trimer of two isoforms 2 and isoform 1 linked by disulfide bonds. Found in a complex with DMTN, F-actin and spectrin. Found in a complex with ADD2, DMTN and SLC2A1. Interacts with F-actin, ITPKB, RASGRF2 and spectrin. Isoform 2 interacts with SLC2A1 (via C-terminus cytoplasmic region). Isoform 1 and isoform 2 interact (phosphorylated form) with plasmodium berghei 14-3-3 protein; the interaction occurs in a PKA-dependent manner. Phosphorylated. Phosphorylation at Ser-403 by PKA causes the C-terminal headpiece domain to associate with the N-terminal core domain, and leads to the inhibition of its actin bundling activity. In terms of processing, the N-terminus is blocked. As to expression, expressed in platelets (at protein level). Expressed in heart, brain, lung, skeletal muscle, and kidney.

It is found in the cytoplasm. The protein resides in the cytosol. The protein localises to the perinuclear region. Its subcellular location is the cytoskeleton. It localises to the cell membrane. It is found in the membrane. The protein resides in the endomembrane system. The protein localises to the cell projection. Its function is as follows. Membrane-cytoskeleton-associated protein with F-actin-binding activity that induces F-actin bundles formation and stabilization. Its F-actin-bundling activity is reversibly regulated upon its phosphorylation by the cAMP-dependent protein kinase A (PKA). Binds to the erythrocyte membrane glucose transporter-1 SLC2A1/GLUT1, and hence stabilizes and attaches the spectrin-actin network to the erythrocytic plasma membrane. Plays a role in maintaining the functional integrity of PKA-activated erythrocyte shape and the membrane mechanical properties. Also plays a role as a modulator of actin dynamics in fibroblasts; acts as a negative regulator of the RhoA activation pathway. In platelets, functions as a regulator of internal calcium mobilization across the dense tubular system that affects platelet granule secretion pathways and aggregation. Also required for the formation of a diverse set of cell protrusions, such as filopodia and lamellipodia, necessary for platelet cell spreading, motility and migration. Acts as a tumor suppressor and inhibits malignant cell transformation. This chain is Dematin (DMTN), found in Homo sapiens (Human).